A 284-amino-acid polypeptide reads, in one-letter code: MIFLSQAQIDALLLEDIQGGDLTTRALNIGHQHGYIEFFLRQGGCVSGISVACKMLTTLGLTIDDAVSDGSQANAGQRLIRAQGNAAALHQGWKAVQNVLEWSCGVSDYLAQMLALLRERYPDGNIACTRKAIPGTRLLASQAILAAGGLIHRAGCAETILLFANHRHFLHDNQDWSGAINQLRRHAPEKKIVVEADTPKEAIAALRAQPDVLQLDKFSPQQATEIAQIAPSLAPHCTLALTGGINLTTLKNYLDCGIRLFITSAPYYAAPADIKVSLQPAASI.

This sequence belongs to the NadC/ModD family.

The chain is Putative pyrophosphorylase ModD (modD) from Escherichia coli O6:H1 (strain CFT073 / ATCC 700928 / UPEC).